The sequence spans 198 residues: Basic helix-loop-helix transcription factor amos (198 aa).

The tract at residues 76–131 (EQQQHHLQANPLGKNQGRSPRYWNKQQRSKPYDKLSTSMSSSTSSASSSSSSSAGF) is disordered. Over residues 111–129 (STSMSSSTSSASSSSSSSA) the composition is skewed to low complexity. The region spanning 138 to 190 (KRRLAANARERRRMNSLNDAFDKLRDVVPSLGHDRRLSKYETLQMAQAYIGDL) is the bHLH domain.

In terms of assembly, efficient DNA binding requires dimerization with another bHLH protein. Interacts with Daughterless (da). During embryonic development, expression is seen in a small cluster of ectodermal cells during stage 10 which becomes restricted to 1 cell by stage 11. Expression is lost from this cell in the thorax and then the abdomen. Later expression is restricted to sensory organ precursors. Very transient expression was detected in distal leg disks at approximately 0-4 hours after puparium formation (APF), correlating with the anlage of the innervated tarsal claw.

It localises to the nucleus. Functionally, transcription factor involved in early neurogenesis; sensillum basiconica formation and maybe sensillum trichodea development. Promotes multiple dendritic (MD) neuron formation. Required for olfactory sensilla; regulated by lozenge (lz). This is Basic helix-loop-helix transcription factor amos (amos) from Drosophila melanogaster (Fruit fly).